The primary structure comprises 199 residues: Probable GTP-binding protein EngB (199 aa).

In terms of domain architecture, EngB-type G spans 22–195 (QLPEIALSGR…WEWIEQQCDI (174 aa)). GTP-binding positions include 30 to 37 (GRSNVGKS), 57 to 61 (GKTQT), 75 to 78 (DVPG), 142 to 145 (TKMD), and 174 to 176 (FSA). 2 residues coordinate Mg(2+): Ser37 and Thr59.

The protein belongs to the TRAFAC class TrmE-Era-EngA-EngB-Septin-like GTPase superfamily. EngB GTPase family. Mg(2+) is required as a cofactor.

Its function is as follows. Necessary for normal cell division and for the maintenance of normal septation. This is Probable GTP-binding protein EngB from Latilactobacillus sakei subsp. sakei (strain 23K) (Lactobacillus sakei subsp. sakei).